The primary structure comprises 418 residues: Arginine deiminase (418 aa).

The Amidino-cysteine intermediate role is filled by C406.

The protein belongs to the arginine deiminase family.

It is found in the cytoplasm. It carries out the reaction L-arginine + H2O = L-citrulline + NH4(+). It participates in amino-acid degradation; L-arginine degradation via ADI pathway; carbamoyl phosphate from L-arginine: step 1/2. The protein is Arginine deiminase of Lentilactobacillus hilgardii (Lactobacillus hilgardii).